Reading from the N-terminus, the 534-residue chain is Tyrosine-protein kinase Fyn (534 aa).

The N-myristoyl glycine moiety is linked to residue Gly2. Residues Cys3 and Cys6 are each lipidated (S-palmitoyl cysteine). At Thr12 the chain carries Phosphothreonine; by PKC. The interval 15–39 is disordered; it reads TDERDGSLTQSSGYRYGTDPTPQHY. The SH3 domain occupies 82–143; it reads TGVTLFEALY…PSNYVAPVDS (62 aa). Residues 149–246 form the SH2 domain; sequence WYFGKLGRKD…GLCFNLTVIA (98 aa). One can recognise a Protein kinase domain in the interval 268–521; sequence LFLEQKLGQG…YLQGFLEDYF (254 aa). ATP contacts are provided by residues 274–282 and Lys296; that span reads LGQGCFAEV. Residue Asp387 is the Proton acceptor of the active site. Tyr417 is subject to Phosphotyrosine; by autocatalysis. Position 528 is a phosphotyrosine (Tyr528).

Belongs to the protein kinase superfamily. Tyr protein kinase family. SRC subfamily. As to quaternary structure, associates through its SH3 domain, to the p85 subunit of phosphatidylinositol 3-kinase. Mn(2+) serves as cofactor. In terms of tissue distribution, thymus and spleen.

The protein localises to the cytoplasm. Its subcellular location is the nucleus. It is found in the cell membrane. It localises to the perikaryon. The enzyme catalyses L-tyrosyl-[protein] + ATP = O-phospho-L-tyrosyl-[protein] + ADP + H(+). Its activity is regulated as follows. Inhibited by phosphorylation of Tyr-528 by leukocyte common antigen and activated by dephosphorylation of this site. Functionally, tyrosine-protein kinase implicated in the control of cell growth. Plays a role in the regulation of intracellular calcium levels. Required in brain development and mature brain function with important roles in the regulation of axon growth, axon guidance, and neurite extension. Role in CNTN1-mediated signaling. The protein is Tyrosine-protein kinase Fyn (FYN) of Gallus gallus (Chicken).